Consider the following 72-residue polypeptide: Prophage late control protein OgrK (72 aa).

In terms of biological role, cryptic version of the phage P2 OGR protein which acts as an activator of P2 late transcription. The sequence is that of Prophage late control protein OgrK (ogrK) from Escherichia coli (strain K12).